A 376-amino-acid polypeptide reads, in one-letter code: Chaperone protein DnaJ (376 aa).

Residues 5–70 (DYYEILGVSK…QKRAAYDQYG (66 aa)) enclose the J domain. The segment at 131–209 (GVTKEIRIPT…CHGHGRVERS (79 aa)) adopts a CR-type zinc-finger fold. Positions 144, 147, 161, 164, 183, 186, 197, and 200 each coordinate Zn(2+). CXXCXGXG motif repeat units follow at residues 144-151 (CDVCHGSG), 161-168 (CPTCHGSG), 183-190 (CPHCQGRG), and 197-204 (CNKCHGHG).

Belongs to the DnaJ family. As to quaternary structure, homodimer. It depends on Zn(2+) as a cofactor.

It localises to the cytoplasm. Functionally, participates actively in the response to hyperosmotic and heat shock by preventing the aggregation of stress-denatured proteins and by disaggregating proteins, also in an autonomous, DnaK-independent fashion. Unfolded proteins bind initially to DnaJ; upon interaction with the DnaJ-bound protein, DnaK hydrolyzes its bound ATP, resulting in the formation of a stable complex. GrpE releases ADP from DnaK; ATP binding to DnaK triggers the release of the substrate protein, thus completing the reaction cycle. Several rounds of ATP-dependent interactions between DnaJ, DnaK and GrpE are required for fully efficient folding. Also involved, together with DnaK and GrpE, in the DNA replication of plasmids through activation of initiation proteins. The protein is Chaperone protein DnaJ of Escherichia fergusonii (strain ATCC 35469 / DSM 13698 / CCUG 18766 / IAM 14443 / JCM 21226 / LMG 7866 / NBRC 102419 / NCTC 12128 / CDC 0568-73).